Consider the following 114-residue polypeptide: Large ribosomal subunit protein bL19 (114 aa).

The protein belongs to the bacterial ribosomal protein bL19 family.

In terms of biological role, this protein is located at the 30S-50S ribosomal subunit interface and may play a role in the structure and function of the aminoacyl-tRNA binding site. The sequence is that of Large ribosomal subunit protein bL19 from Clostridium acetobutylicum (strain ATCC 824 / DSM 792 / JCM 1419 / IAM 19013 / LMG 5710 / NBRC 13948 / NRRL B-527 / VKM B-1787 / 2291 / W).